The sequence spans 91 residues: Acylphosphatase (91 aa).

An Acylphosphatase-like domain is found at arginine 4–tyrosine 91. Catalysis depends on residues arginine 19 and asparagine 37.

The protein belongs to the acylphosphatase family.

The catalysed reaction is an acyl phosphate + H2O = a carboxylate + phosphate + H(+). This Geobacter sulfurreducens (strain ATCC 51573 / DSM 12127 / PCA) protein is Acylphosphatase (acyP).